Reading from the N-terminus, the 148-residue chain is Large ribosomal subunit protein uL15 (148 aa).

Residues 14–54 (HRKKRVGCGEGGGHGKTSGRGGKGQTARSGSSIRPGFEGGQ) form a disordered region. The segment covering 21 to 37 (CGEGGGHGKTSGRGGKG) has biased composition (gly residues).

This sequence belongs to the universal ribosomal protein uL15 family. As to quaternary structure, part of the 50S ribosomal subunit.

Its function is as follows. Binds to the 23S rRNA. This chain is Large ribosomal subunit protein uL15, found in Opitutus terrae (strain DSM 11246 / JCM 15787 / PB90-1).